The sequence spans 187 residues: UPF0398 protein SH1465 (187 aa).

This sequence belongs to the UPF0398 family.

The sequence is that of UPF0398 protein SH1465 from Staphylococcus haemolyticus (strain JCSC1435).